The primary structure comprises 61 residues: Small ribosomal subunit protein uS14 (61 aa).

C24, C27, C40, and C43 together coordinate Zn(2+).

This sequence belongs to the universal ribosomal protein uS14 family. Zinc-binding uS14 subfamily. As to quaternary structure, part of the 30S ribosomal subunit. Contacts proteins S3 and S10. It depends on Zn(2+) as a cofactor.

Binds 16S rRNA, required for the assembly of 30S particles and may also be responsible for determining the conformation of the 16S rRNA at the A site. In Kosmotoga olearia (strain ATCC BAA-1733 / DSM 21960 / TBF 19.5.1), this protein is Small ribosomal subunit protein uS14.